The following is a 210-amino-acid chain: Uridine kinase P10 (210 aa).

Residue 10–18 (GISGSGKST) coordinates ATP. Aspartate 41 is a catalytic residue.

It belongs to the uridine kinase family. Interacts with host eIF-2B; this interaction disrupts the interaction between eIF2 and eIF-2B, which leads to the inhibition of stress granules formation.

The protein localises to the host cytoplasm. It is found in the host perinuclear region. The enzyme catalyses uridine + ATP = UMP + ADP + H(+). In terms of biological role, inhibits the integrated stress response (ISR) in the infected cell by preventing the sequestration of eIF2B by phosphorylated EIF2S1/eIF-2alpha. Stress granule formation in response to EIF2S1/eIF-2alpha phosphorylation is thus inhibited, which allows protein synthesis and viral replication. Phosphorylates uridine to uridine monophosphate. The polypeptide is Uridine kinase P10 (ORF10) (Beluga whale coronavirus (strain SW1) (BwCoV)).